Consider the following 197-residue polypeptide: MPKVGMQPIRRQQLIEATLTAIDQVGMGDASIALIARLAGVSNGIISHYFKDKNGLIAATMRYLMNALIDNVHERRLALTDDSPRAHLQVIIEGNFDASQVNGPAMKTWLAFWATSMHHPSLHRLQRINDQRLYSNLCCQFRRVLPLPHARKAARGLAALIDGLWLRGALSGDAFDTAQAQRIAYEYMDFQLAKQVS.

In terms of domain architecture, HTH tetR-type spans Pro8–Leu68. Positions Ser31–Phe50 form a DNA-binding region, H-T-H motif.

It participates in amine and polyamine biosynthesis; betaine biosynthesis via choline pathway [regulation]. Functionally, repressor involved in the biosynthesis of the osmoprotectant glycine betaine. It represses transcription of the choline transporter BetT and the genes of BetAB involved in the synthesis of glycine betaine. The chain is HTH-type transcriptional regulator BetI from Pseudomonas fluorescens (strain SBW25).